A 902-amino-acid chain; its full sequence is 4-hydroxyphenylacetate decarboxylase glycyl radical subunit (902 aa).

Residues 38–774 enclose the PFL domain; that stretch reads KRAEDLLDVY…ATLATPDGRL (737 aa). 4-hydroxyphenylacetate-binding residues include Ser348 and Cys507. Catalysis depends on Cys507, which acts as the Cysteine radical intermediate. Glu509 serves as the catalytic Proton donor. 4-hydroxyphenylacetate-binding residues include His540 and Glu641. In terms of domain architecture, Glycine radical spans 782–902; sequence GSVSAYAGTD…VIARTEYEGV (121 aa). The residue at position 877 (Gly877) is a Glycine radical.

The protein belongs to the glycyl radical enzyme (GRE) family. HPAD subfamily. As to quaternary structure, heterooctamer consisting of 4 large (HpdB) subunits and 4 small (HpdC) subunits, arranged as a tetramer of heterodimers. Also forms a catalytically inactive homodimer. In terms of processing, requires the activating protein CsdA to generate the key active site glycyl radical that is involved in catalysis. Post-translationally, phosphorylated on serine. Phosphorylation may trigger the formation of the active heterooctamers and thereby regulates enzyme activity.

The enzyme catalyses 4-hydroxyphenylacetate + H(+) = 4-methylphenol + CO2. The catalysed reaction is 3,4-dihydroxyphenylacetate + H(+) = 4-methylcatechol + CO2. Its function is as follows. Glycyl radical subunit of the HPA decarboxylase that decarboxylates phenylacetates with a hydroxyl group in the p-position. Active toward 4-hydroxyphenylacetate and 3,4-dihydroxyphenylacetate, forming 4-methylphenol and 4-methylcatechol, respectively. Is likely involved in the catabolism of aromatic amino acids such as tyrosine fermentation. 4-methylphenol (p-cresol) formation provides metabolic toxicity, which allows an active suppression of other microbes and may provide growth advantages for the producers in highly competitive environments. The large subunit is the catalytic subunit that binds the substrate. The chain is 4-hydroxyphenylacetate decarboxylase glycyl radical subunit from Clostridioides difficile (strain 630) (Peptoclostridium difficile).